A 737-amino-acid polypeptide reads, in one-letter code: Cilium assembly protein DZIP1L (737 aa).

Residues 1–293 (MGFKGKYPQM…LKQSNEQFIQ (293 aa)) are interaction with Rab8. Positions 98-132 (VTDLKEAHTTAQEEIATLRKSLSESNNEVVQLHKR) form a coiled coil. A C2H2-type zinc finger spans residues 144–167 (YPCHLCTKNFISNEALNVHIGRKH). Disordered regions lie at residues 167-187 (HRVASPPSLTSATGKEKDRDK), 214-267 (ERNI…KEQL), 415-548 (SEFL…RKDA), 624-682 (KSPL…VSRD), and 698-737 (IRGASKSSLSSRPVPLPRKRVMFNTTEDGKSFNDSDDNLK). Composition is skewed to basic and acidic residues over residues 244 to 266 (EPKEKDEDSGEARQSEASERKEQ) and 415 to 438 (SEFLKQKHDDDTYSIEEAPRKGSE). Residues 457-469 (SAGSSDSNPTYTK) show a composition bias toward polar residues. The span at 492–510 (SQEETENEEERSLTEEEGT) shows a compositional bias: acidic residues. Over residues 665–677 (SSEQQTRSPSPQR) the composition is skewed to polar residues. A compositionally biased stretch (basic and acidic residues) spans 724–737 (EDGKSFNDSDDNLK).

It belongs to the DZIP C2H2-type zinc-finger protein family. As to quaternary structure, component of a ciliary transition zone (TZ)-localized complex composed of DZIP1, Fam92 and Cby. Interacts directly with Cby. Interacts with Cep290 (via N-terminus). Interacts (via N-terminus) with Rab8. In neurons of the second and third antennal segments, expressed at the tip of the dendrites.

The protein localises to the cytoplasm. It localises to the cytoskeleton. Its subcellular location is the microtubule organizing center. It is found in the centrosome. The protein resides in the centriole. The protein localises to the cilium basal body. In terms of biological role, component of the DZIP1-Fam92-Cby complex which promotes ciliogenesis in sensory neurons and spermatocytes by acting downstream of Cep290 to initiate early ciliary membrane formation and thus transition zone (TZ) assembly. During spermatogenesis, also regulates distal elongation of the basal-body and their docking (anchoring) to the plasma membrane and as a consequence, regulates the initiation and proper elongation of axonemal microtubules. Within the complex, required to recruit or stabilize Rab8, Fam92 and Cby at the distal basal body of cilia to promote early ciliary membrane formation and initiate TZ assembly. Also acts with Fam92 to restrict Cep290 localization to the proximal part of the TZ. May also be involved in recruitment or stabilization of Mks1 at the TZ. This chain is Cilium assembly protein DZIP1L, found in Drosophila melanogaster (Fruit fly).